The chain runs to 310 residues: tRNA dimethylallyltransferase (310 aa).

12–19 serves as a coordination point for ATP; sequence GPTATGKT. 14 to 19 is a binding site for substrate; sequence TATGKT. Residues 37–40 are interaction with substrate tRNA; the sequence is DSMM.

The protein belongs to the IPP transferase family. In terms of assembly, monomer. Requires Mg(2+) as cofactor.

It catalyses the reaction adenosine(37) in tRNA + dimethylallyl diphosphate = N(6)-dimethylallyladenosine(37) in tRNA + diphosphate. Its function is as follows. Catalyzes the transfer of a dimethylallyl group onto the adenine at position 37 in tRNAs that read codons beginning with uridine, leading to the formation of N6-(dimethylallyl)adenosine (i(6)A). The sequence is that of tRNA dimethylallyltransferase from Desulforudis audaxviator (strain MP104C).